The primary structure comprises 299 residues: Probable transport accessory protein MmpS3 (299 aa).

Positions methionine 1 to proline 72 are disordered. The chain crosses the membrane as a helical span at residues valine 101–valine 121. The segment covering lysine 128–proline 139 has biased composition (polar residues). Residues lysine 128 to glutamine 213 form a disordered region. Residues proline 150 to threonine 163 show a composition bias toward pro residues. Positions glutamate 164–valine 176 are enriched in low complexity. The segment covering threonine 177 to alanine 193 has biased composition (pro residues).

The protein belongs to the MmpS family.

It is found in the cell membrane. The polypeptide is Probable transport accessory protein MmpS3 (mmpS3) (Mycobacterium tuberculosis (strain CDC 1551 / Oshkosh)).